The following is a 122-amino-acid chain: Large ribosomal subunit protein uL14 (122 aa).

Belongs to the universal ribosomal protein uL14 family. In terms of assembly, part of the 50S ribosomal subunit. Forms a cluster with proteins L3 and L19. In the 70S ribosome, L14 and L19 interact and together make contacts with the 16S rRNA in bridges B5 and B8.

Its function is as follows. Binds to 23S rRNA. Forms part of two intersubunit bridges in the 70S ribosome. The protein is Large ribosomal subunit protein uL14 of Streptococcus suis (strain 05ZYH33).